A 229-amino-acid chain; its full sequence is Prolactin (229 aa).

Residues 1-30 (MDSKGSSQKGSRLLLLLVVSNLLLCQGVVS) form the signal peptide. An intrachain disulfide couples cysteine 34 to cysteine 41. Residues serine 56, serine 64, and serine 120 each carry the phosphoserine modification. Intrachain disulfides connect cysteine 88/cysteine 204 and cysteine 221/cysteine 229.

This sequence belongs to the somatotropin/prolactin family. As to quaternary structure, interacts with PRLR.

It is found in the secreted. In terms of biological role, prolactin acts primarily on the mammary gland by promoting lactation. In Bos taurus (Bovine), this protein is Prolactin (PRL).